We begin with the raw amino-acid sequence, 262 residues long: uncharacterized protein (262 aa).

The stretch at 41–118 forms a coiled coil; sequence ELQKNEKIDK…EEKAEDFINK (78 aa).

This is an uncharacterized protein from Plasmodium falciparum (isolate 3D7).